The chain runs to 198 residues: dITP/XTP pyrophosphatase (198 aa).

10–15 lines the substrate pocket; the sequence is SGSDHK. Glu-43 and Asp-72 together coordinate Mg(2+). The Proton acceptor role is filled by Asp-72. Substrate-binding positions include Ser-73, 154–157, Lys-177, and 182–183; these read FGYD and HR.

This sequence belongs to the HAM1 NTPase family. As to quaternary structure, homodimer. Requires Mg(2+) as cofactor.

The enzyme catalyses XTP + H2O = XMP + diphosphate + H(+). It catalyses the reaction dITP + H2O = dIMP + diphosphate + H(+). It carries out the reaction ITP + H2O = IMP + diphosphate + H(+). Functionally, pyrophosphatase that catalyzes the hydrolysis of nucleoside triphosphates to their monophosphate derivatives, with a high preference for the non-canonical purine nucleotides XTP (xanthosine triphosphate), dITP (deoxyinosine triphosphate) and ITP. Seems to function as a house-cleaning enzyme that removes non-canonical purine nucleotides from the nucleotide pool, thus preventing their incorporation into DNA/RNA and avoiding chromosomal lesions. This chain is dITP/XTP pyrophosphatase, found in Leptospira biflexa serovar Patoc (strain Patoc 1 / Ames).